The primary structure comprises 473 residues: Ribulose bisphosphate carboxylase large chain (473 aa).

Residues 1 to 2 (MS) constitute a propeptide that is removed on maturation. Substrate contacts are provided by Asn-123 and Thr-173. The Proton acceptor role is filled by Lys-175. Lys-177 is a binding site for substrate. Positions 201, 203, and 204 each coordinate Mg(2+). Residue Lys-201 is modified to N6-carboxylysine. Position 208 is a phosphoserine (Ser-208). His-294 serves as the catalytic Proton acceptor. Arg-295 and His-327 together coordinate substrate. Residue Thr-330 is modified to Phosphothreonine. Ser-379 provides a ligand contact to substrate.

The protein belongs to the RuBisCO large chain family. Type I subfamily. Heterohexadecamer of 8 large chains and 8 small chains; disulfide-linked. The disulfide link is formed within the large subunit homodimers. The cofactor is Mg(2+). In terms of processing, the disulfide bond which can form in the large chain dimeric partners within the hexadecamer appears to be associated with oxidative stress and protein turnover.

It localises to the plastid. Its subcellular location is the chloroplast. The catalysed reaction is 2 (2R)-3-phosphoglycerate + 2 H(+) = D-ribulose 1,5-bisphosphate + CO2 + H2O. It catalyses the reaction D-ribulose 1,5-bisphosphate + O2 = 2-phosphoglycolate + (2R)-3-phosphoglycerate + 2 H(+). RuBisCO catalyzes two reactions: the carboxylation of D-ribulose 1,5-bisphosphate, the primary event in carbon dioxide fixation, as well as the oxidative fragmentation of the pentose substrate in the photorespiration process. Both reactions occur simultaneously and in competition at the same active site. This chain is Ribulose bisphosphate carboxylase large chain, found in Sinapis alba (White mustard).